A 164-amino-acid polypeptide reads, in one-letter code: Galectin-3 (164 aa).

In terms of domain architecture, Galectin spans 9 to 154 (STVDLSEPLK…FSDVLGVTVL (146 aa)). Positions 60, 64, 73, and 84 each coordinate a carbohydrate.

Homotetramer. Oligomerization is required for carbohydrate binding.

The protein resides in the secreted. Its subcellular location is the extracellular space. The protein localises to the extracellular matrix. It is found in the cell wall. In terms of biological role, binds lactose. May play a role in fruiting body formation. The chain is Galectin-3 (Cgl3) from Coprinopsis cinerea (strain Okayama-7 / 130 / ATCC MYA-4618 / FGSC 9003) (Inky cap fungus).